Reading from the N-terminus, the 283-residue chain is Pantothenate synthetase (283 aa).

30-37 (MGNLHDGH) serves as a coordination point for ATP. Residue histidine 37 is the Proton donor of the active site. Glutamine 61 contacts (R)-pantoate. Beta-alanine is bound at residue glutamine 61. ATP is bound at residue 149–152 (GEKD). A (R)-pantoate-binding site is contributed by glutamine 155. 186–189 (LSSR) contacts ATP.

Belongs to the pantothenate synthetase family. As to quaternary structure, homodimer.

The protein resides in the cytoplasm. It catalyses the reaction (R)-pantoate + beta-alanine + ATP = (R)-pantothenate + AMP + diphosphate + H(+). Its pathway is cofactor biosynthesis; (R)-pantothenate biosynthesis; (R)-pantothenate from (R)-pantoate and beta-alanine: step 1/1. Its function is as follows. Catalyzes the condensation of pantoate with beta-alanine in an ATP-dependent reaction via a pantoyl-adenylate intermediate. In Escherichia coli O45:K1 (strain S88 / ExPEC), this protein is Pantothenate synthetase.